A 390-amino-acid chain; its full sequence is Phosphopentomutase (390 aa).

Residues D10, D282, H287, D323, H324, and H335 each coordinate Mn(2+).

Belongs to the phosphopentomutase family. Mn(2+) is required as a cofactor.

The protein localises to the cytoplasm. The enzyme catalyses 2-deoxy-alpha-D-ribose 1-phosphate = 2-deoxy-D-ribose 5-phosphate. It carries out the reaction alpha-D-ribose 1-phosphate = D-ribose 5-phosphate. Its pathway is carbohydrate degradation; 2-deoxy-D-ribose 1-phosphate degradation; D-glyceraldehyde 3-phosphate and acetaldehyde from 2-deoxy-alpha-D-ribose 1-phosphate: step 1/2. In terms of biological role, isomerase that catalyzes the conversion of deoxy-ribose 1-phosphate (dRib-1-P) and ribose 1-phosphate (Rib-1-P) to deoxy-ribose 5-phosphate (dRib-5-P) and ribose 5-phosphate (Rib-5-P), respectively. The chain is Phosphopentomutase from Lachnoclostridium phytofermentans (strain ATCC 700394 / DSM 18823 / ISDg) (Clostridium phytofermentans).